A 71-amino-acid chain; its full sequence is MKKGIHPEMKLVTVKCACGAEHTFYTTVDNIRIDVCSKCHPFYTSGGKGGVLIVDTEGRVEKFRRKYGDNY.

The Zn(2+) site is built by cysteine 16, cysteine 18, cysteine 36, and cysteine 39.

It belongs to the bacterial ribosomal protein bL31 family. Type A subfamily. As to quaternary structure, part of the 50S ribosomal subunit. Zn(2+) serves as cofactor.

Binds the 23S rRNA. The sequence is that of Large ribosomal subunit protein bL31 from Thermotoga sp. (strain RQ2).